The following is a 163-amino-acid chain: GPI-anchored protein LLG2 (163 aa).

A signal peptide spans 1-23 (MEISPYCLLSLLPIFLLSGFSLS). N-linked (GlcNAc...) asparagine glycosylation is present at Asn52. Ser135 is lipidated: GPI-anchor amidated serine. Residues 136–163 (DSIPRASTTASLAVLSTFLVLCLLFLSS) constitute a propeptide, removed in mature form.

Expressed in pollen, pollen tubes, sporophytic pistil tissues, in the early stages of female gametophyte development, and in unfertilized, mature ovules.

It localises to the cell membrane. The chain is GPI-anchored protein LLG2 from Arabidopsis thaliana (Mouse-ear cress).